The sequence spans 409 residues: MTNTKRGPLLLILFAALTAGAGNGITIVAFPWLVLQHNGSALDASIVAMAGTLPLLVATLIAGAAVDYLGRRRVSMISDLLSALSVAAVPVLALIFGVDAVNVAVLAVLAGLGAFFDPAGMTARETMLPEAAGRAGWTLDHANSVYEAVFNLGYIVGPGIGGLMIATLGGINTMWVTAGAFCCSILAISVLRLEGAGAPDRSVLTEAVLAGIVEGLRFVWYTPVLRTLAIVDLVATGLYMPMESVLFPKYFTDRNEPTELGWVLMALSIGGLLGALGYAVMSRYMSRRATMLTAVITLGVAMTVIAFLPPLPLILVLCAIVGFVYGPIAPIYNYVMQTTAPQHLRGRVVGVMGSLAYAAGPLGLILAGPLADAAGLHATFLALSLPMLLLGVVAVFLPRLRELDLASKP.

12 helical membrane-spanning segments follow: residues 10–30 (LLILFAALTAGAGNGITIVAF), 46–66 (IVAMAGTLPLLVATLIAGAAV), 80–98 (LLSALSVAAVPVLALIFGV), 104–123 (AVLAVLAGLGAFFDPAGMTA), 144–168 (SVYEAVFNLGYIVGPGIGGLMIATL), 174–193 (MWVTAGAFCCSILAISVLRL), 218–240 (FVWYTPVLRTLAIVDLVATGLYM), 260–282 (LGWVLMALSIGGLLGALGYAVMS), 289–308 (ATMLTAVITLGVAMTVIAFL), 313–335 (LILVLCAIVGFVYGPIAPIYNYV), 348–370 (VVGVMGSLAYAAGPLGLILAGPL), and 375–397 (GLHATFLALSLPMLLLGVVAVFL).

Belongs to the major facilitator superfamily. Drug:H(+) antiporter-3 (DHA3) (TC 2.A.1.21) family.

Its subcellular location is the cell inner membrane. With respect to regulation, efflux activity is inhibited by carbonyl cyanide m-chlorophenylhydrazone (CCCP) and reserpine, but not by o-vanadate or chlorpromazine (CPZ). Its function is as follows. Efflux pump that contributes to intrinsic antibiotic resistance. The pump uses the electrochemical gradient as a source of energy. Confers low-level resistance to tetracycline and to several aminoglycosides, including streptomycin, gentamicin, 2'-N-ethylnetilmicin and 6'-N-ethylnetilmicin. The sequence is that of Multidrug efflux pump Tap from Mycolicibacterium fortuitum (Mycobacterium fortuitum).